Here is a 94-residue protein sequence, read N- to C-terminus: Protein RnfH (94 aa).

It belongs to the UPF0125 (RnfH) family.

In Serratia proteamaculans (strain 568), this protein is Protein RnfH.